The chain runs to 150 residues: Glycophorin-A (150 aa).

Residues 1–19 (MYGKIIFVLLLSEIVSISA) form the signal peptide. Residues 20–91 (LSTTEVAMHT…QLAHHFSEPE (72 aa)) are Extracellular-facing. A glycan (O-linked (GalNAc...) serine) is linked at Ser21. Residues Thr22, Thr23, and Thr29 are each glycosylated (O-linked (GalNAc...) threonine). An O-linked (GalNAc...) serine glycan is attached at Ser30. The O-linked (GalNAc...) threonine glycan is linked to Thr31. Ser32 carries O-linked (GalNAc...) serine glycosylation. A glycan (O-linked (GalNAc...) threonine) is linked at Thr36. Ser38 and Ser41 each carry an O-linked (GalNAc...) serine glycan. O-linked (GalNAc...) threonine glycosylation is present at Thr44. An N-linked (GlcNAc...) asparagine glycan is attached at Asn45. Residues Thr52 and Thr56 are each glycosylated (O-linked (GalNAc...) threonine). O-linked (GalNAc...) serine glycans are attached at residues Ser63 and Ser66. Thr69 carries an O-linked (GalNAc...) threonine glycan. The chain crosses the membrane as a helical span at residues 92–114 (ITLIIFGVMAGVIGTILLISYGI). Residues 115–150 (RRLIKKSPSDVKPLPSPDTDVPLSSVEIENPETSDQ) lie on the Cytoplasmic side of the membrane. The tract at residues 121–150 (SPSDVKPLPSPDTDVPLSSVEIENPETSDQ) is disordered. A Phosphothreonine modification is found at Thr133. Phosphoserine is present on residues Ser138 and Ser148.

Belongs to the glycophorin A family. Homodimer. Component of the ankyrin-1 complex in the erythrocyte, composed of ANK1, RHCE, RHAG, SLC4A1, EPB42, GYPA, GYPB and AQP1. Interacts with SLC4A1; a GYPA monomer is bound at each end of the SLC4A1 dimer forming a heterotetramer. In terms of assembly, (Microbial infection) Interacts with Streptococcus gordonii hsa protein. As to quaternary structure, (Microbial infection) Interacts (in a sialic acid-independent manner) with P.falciparum MSP1 subunit p83. Post-translationally, the major O-linked glycan are NeuAc-alpha-(2-3)-Gal-beta-(1-3)-[NeuAc-alpha-(2-6)]-GalNAcOH (about 78 %) and NeuAc-alpha-(2-3)-Gal-beta-(1-3)-GalNAcOH (17 %). Minor O-glycans (5 %) include NeuAc-alpha-(2-3)-Gal-beta-(1-3)-[NeuAc-alpha-(2-6)]-GalNAcOH NeuAc-alpha-(2-8)-NeuAc-alpha-(2-3)-Gal-beta-(1-3)-GalNAcOH. About 1% of all O-linked glycans carry blood group A, B and H determinants. They derive from a type-2 precursor core structure, Gal-beta-(1,3)-GlcNAc-beta-1-R, and the antigens are synthesized by addition of fucose (H antigen-specific) and then N-acetylgalactosamine (A antigen-specific) or galactose (B antigen-specific). Specifically O-linked-glycans are NeuAc-alpha-(2-3)-Gal-beta-(1-3)-GalNAcOH-(6-1)-GlcNAc-beta-(4-1)-[Fuc-alpha-(1-2)]-Gal-beta-(3-1)-GalNAc-alpha (about 1%, B antigen-specific) and NeuAc-alpha-(2-3)-Gal-beta-(1-3)-GalNAcOH-(6-1)-GlcNAc-beta-(4-1)-[Fuc-alpha-(1-2)]-Gal-beta (1 %, O antigen-, A antigen- and B antigen-specific).

The protein resides in the cell membrane. In terms of biological role, component of the ankyrin-1 complex, a multiprotein complex involved in the stability and shape of the erythrocyte membrane. Glycophorin A is the major intrinsic membrane protein of the erythrocyte. The N-terminal glycosylated segment, which lies outside the erythrocyte membrane, has MN blood group receptors. Appears to be important for the function of SLC4A1 and is required for high activity of SLC4A1. May be involved in translocation of SLC4A1 to the plasma membrane. Its function is as follows. (Microbial infection) Appears to be a receptor for Hepatitis A virus (HAV). Functionally, (Microbial infection) Receptor for P.falciparum erythrocyte-binding antigen 175 (EBA-175); binding of EBA-175 is dependent on sialic acid residues of the O-linked glycans. This is Glycophorin-A from Homo sapiens (Human).